The chain runs to 594 residues: Zinc finger protein 467 (594 aa).

Residues 1–70 (MRETLEALNS…HTEQAEAPCM (70 aa)) are disordered. Lysine 97 participates in a covalent cross-link: Glycyl lysine isopeptide (Lys-Gly) (interchain with G-Cter in SUMO2). 12 C2H2-type zinc fingers span residues 160–182 (YGCE…QRLH), 188–210 (CACP…QRSH), 216–238 (FPCS…LRTH), 244–266 (YPCA…QKTH), 272–294 (FPCT…QRIH), 300–322 (YQCT…QRVH), 355–377 (FACS…QSLH), 430–452 (FFCP…RRVH), 458–480 (FACA…SRAH), 486–508 (FACA…QAVH), 514–536 (HACA…QAIH), and 542–564 (FSCP…QRIH). The interval 313-350 (QHLVRHQRVHDAASRTRSSPDIPATPHPPTASLAPSPT) is disordered. Lysine 368 is covalently cross-linked (Glycyl lysine isopeptide (Lys-Gly) (interchain with G-Cter in SUMO2)).

This sequence belongs to the krueppel C2H2-type zinc-finger protein family. Interacts with STAT3. Enhances STAT3 activity by keeping it in the nucleus.

The protein resides in the nucleus. Its function is as follows. Transcription factor that promotes adipocyte differentiation and suppresses osteoblast differentiation in the bone marrow. Enhances the osteoclast-supporting ability of stromal cells. Binds with STAT3 the consensus sequence 5'-CTTCTGGGAAGA-3' of the acute phase response element (APRE). Transactivates several promoters including FOS, OSM and PPARG. Recruits a histone deacetylase complex. The chain is Zinc finger protein 467 (Znf467) from Rattus norvegicus (Rat).